The following is a 90-amino-acid chain: UPF0335 protein RPD_1405 (90 aa).

Belongs to the UPF0335 family.

The chain is UPF0335 protein RPD_1405 from Rhodopseudomonas palustris (strain BisB5).